We begin with the raw amino-acid sequence, 577 residues long: Mitochondrial-processing peptidase subunit alpha (577 aa).

Residues 1–35 (MLNRFRPARLVAQSSRCLPLTRARAGPLPVNNART) constitute a mitochondrion transit peptide. The disordered stretch occupies residues 259 to 301 (SDAPGLSRTGSETSVDSLVSESSEASSESSSSSSDSSESSGGL). The span at 269–301 (SETSVDSLVSESSEASSESSSSSSDSSESSGGL) shows a compositional bias: low complexity.

It belongs to the peptidase M16 family. In terms of assembly, heterodimer of mpp (alpha) and pep (beta) subunits, forming the mitochondrial processing protease (MPP) in which mpp is involved in substrate recognition and binding and pep is the catalytic subunit.

The protein localises to the mitochondrion matrix. Functionally, substrate recognition and binding subunit of the essential mitochondrial processing protease (MPP), which cleaves the mitochondrial sequence off newly imported precursors proteins. The chain is Mitochondrial-processing peptidase subunit alpha from Neurospora crassa (strain ATCC 24698 / 74-OR23-1A / CBS 708.71 / DSM 1257 / FGSC 987).